A 310-amino-acid polypeptide reads, in one-letter code: UPF0761 membrane protein VSAL_I2938 (310 aa).

6 helical membrane-spanning segments follow: residues 34–54 (YMAYITLLSLVPLVTVLLSVL), 97–117 (MTAVGSGFLFVASVMLISAID), 136–156 (FSLYWMILTLGPLLVWASLAA), 178–198 (LLGWLPIILSFSAFLGLYLLV), 207–227 (HALVGAMSAGCLFEVSKVGFA), and 242–262 (ALAAVPILFVWIYLCWIIVLI).

The protein belongs to the UPF0761 family.

It is found in the cell inner membrane. In Aliivibrio salmonicida (strain LFI1238) (Vibrio salmonicida (strain LFI1238)), this protein is UPF0761 membrane protein VSAL_I2938.